Consider the following 669-residue polypeptide: RNA-binding protein 14 (669 aa).

RRM domains follow at residues 1-73 and 79-149; these read MKIF…MSRP and WKIF…LSTK. Glycyl lysine isopeptide (Lys-Gly) (interchain with G-Cter in SUMO2) cross-links involve residues Lys126, Lys135, Lys138, Lys149, and Lys153. Disordered regions lie at residues 148 to 175 and 193 to 232; these read TKGQKKGPGLAIQSGDKTKKPGAGDTAF and NSTGGFDGQARQPTPPFFGRDRSPLRRSPPRASYVAPLTA. Ser161 is subject to Phosphoserine. N6-acetyllysine; alternate is present on Lys164. A Glycyl lysine isopeptide (Lys-Gly) (interchain with G-Cter in SUMO2); alternate cross-link involves residue Lys164. Thr206 is subject to Phosphothreonine. Ser220, Ser242, Ser244, Ser256, Ser272, and Ser280 each carry phosphoserine. The disordered stretch occupies residues 284 to 303; it reads PYRGQLASPSSQSAAASSLG. Over residues 287-303 the composition is skewed to low complexity; the sequence is GQLASPSSQSAAASSLG. Residues 307–354 are TRBP-interacting domain; interaction with STIL; it reads GAQPSASALSSYGGQPAAASSLNSYGAQGSSLASYGNQPSSYGAQAAS. Phosphoserine occurs at positions 520, 523, 527, and 562. The disordered stretch occupies residues 569 to 590; the sequence is ANSTPPPYERTRLSPPRASYDD. Thr572 is subject to Phosphothreonine. Ser582 is modified (phosphoserine). Lys600 is covalently cross-linked (Glycyl lysine isopeptide (Lys-Gly) (interchain with G-Cter in SUMO2)). 6 positions are modified to phosphoserine: Ser618, Ser620, Ser623, Ser627, Ser643, and Ser649.

As to quaternary structure, interacts with NCOA6, CITED1 and XRCC5/KU86. Interacts with SS18. Interacts with STIL and interferes with its interaction with CPAP. Interacts with gamma-tubulin. Part of the HDP-RNP complex composed of at least HEXIM1, PRKDC, XRCC5, XRCC6, paraspeckle proteins (SFPQ, NONO, PSPC1, RBM14, and MATR3) and NEAT1 RNA.

Its subcellular location is the nucleus. The protein localises to the nucleolus. It is found in the cytoplasm. Its function is as follows. May function as a nuclear receptor coactivator, enhancing transcription through other coactivators such as NCOA6 and CITED1. Regulates centriole biogenesis by suppressing the formation of aberrant centriolar protein complexes in the cytoplasm and thus preserving mitotic spindle integrity. Prevents the formation of the STIL-CPAP complex (which can induce the formation of aberrant centriolar protein complexes) by interfering with the interaction of STIL with CPAP. Plays a role in the regulation of DNA virus-mediated innate immune response by assembling into the HDP-RNP complex, a complex that serves as a platform for IRF3 phosphorylation and subsequent innate immune response activation through the cGAS-STING pathway. In Bos taurus (Bovine), this protein is RNA-binding protein 14 (RBM14).